A 307-amino-acid chain; its full sequence is Ornithine carbamoyltransferase (307 aa).

Carbamoyl phosphate contacts are provided by residues serine 55–threonine 58, glutamine 82, arginine 106, and histidine 133–glutamine 136. L-ornithine contacts are provided by residues asparagine 164, aspartate 224, and serine 228–methionine 229. Residues cysteine 263–leucine 264 and arginine 291 contribute to the carbamoyl phosphate site.

This sequence belongs to the aspartate/ornithine carbamoyltransferase superfamily. OTCase family.

The protein localises to the cytoplasm. It carries out the reaction carbamoyl phosphate + L-ornithine = L-citrulline + phosphate + H(+). Its pathway is amino-acid biosynthesis; L-arginine biosynthesis; L-arginine from L-ornithine and carbamoyl phosphate: step 1/3. Its function is as follows. Reversibly catalyzes the transfer of the carbamoyl group from carbamoyl phosphate (CP) to the N(epsilon) atom of ornithine (ORN) to produce L-citrulline. This is Ornithine carbamoyltransferase from Bradyrhizobium diazoefficiens (strain JCM 10833 / BCRC 13528 / IAM 13628 / NBRC 14792 / USDA 110).